Consider the following 326-residue polypeptide: Fructokinase (326 aa).

Residues 275 to 326 (EQALRNGPDPRRQSRRRHRLPRRRQSTLGARDWSLRLEQDSDPHPPDDTFSP) are disordered. Residues 287–299 (QSRRRHRLPRRRQ) show a composition bias toward basic residues. The segment covering 307 to 326 (WSLRLEQDSDPHPPDDTFSP) has biased composition (basic and acidic residues).

The protein belongs to the carbohydrate kinase PfkB family.

It catalyses the reaction D-fructose + ATP = D-fructose 6-phosphate + ADP + H(+). The protein is Fructokinase (frk) of Rhizobium leguminosarum bv. trifolii.